We begin with the raw amino-acid sequence, 444 residues long: Glutamyl-tRNA reductase (444 aa).

Substrate contacts are provided by residues 49-52 (TCNR), Ser-109, 114-116 (ETQ), and Gln-120. The Nucleophile role is filled by Cys-50. 189–194 (GAGKMS) lines the NADP(+) pocket. Residues 425–444 (KPKKQPAPAGIKEPVLAKKG) form a disordered region.

Belongs to the glutamyl-tRNA reductase family. In terms of assembly, homodimer.

The enzyme catalyses (S)-4-amino-5-oxopentanoate + tRNA(Glu) + NADP(+) = L-glutamyl-tRNA(Glu) + NADPH + H(+). It functions in the pathway porphyrin-containing compound metabolism; protoporphyrin-IX biosynthesis; 5-aminolevulinate from L-glutamyl-tRNA(Glu): step 1/2. Functionally, catalyzes the NADPH-dependent reduction of glutamyl-tRNA(Glu) to glutamate 1-semialdehyde (GSA). In Pelotomaculum thermopropionicum (strain DSM 13744 / JCM 10971 / SI), this protein is Glutamyl-tRNA reductase.